The primary structure comprises 258 residues: Snake venom serine protease PTLE1 (258 aa).

An N-terminal signal peptide occupies residues 1–18 (MVLIRVLANLLILQLSYA). Positions 19–24 (QKSSEL) are excised as a propeptide. Residues 25-249 (VIGGDECNIN…YTDWIENIIA (225 aa)) form the Peptidase S1 domain. Cystine bridges form between cysteine 31–cysteine 163, cysteine 50–cysteine 66, cysteine 98–cysteine 256, cysteine 142–cysteine 210, cysteine 174–cysteine 189, and cysteine 200–cysteine 225. Residue asparagine 44 is glycosylated (N-linked (GlcNAc...) asparagine). Histidine 65 (charge relay system) is an active-site residue. N-linked (GlcNAc...) asparagine glycans are attached at residues asparagine 79 and asparagine 103. The Charge relay system role is filled by aspartate 110. Residue asparagine 121 is glycosylated (N-linked (GlcNAc...) asparagine). The active-site Charge relay system is serine 204.

Belongs to the peptidase S1 family. Snake venom subfamily. As to quaternary structure, monomer. As to expression, expressed by the venom gland.

Its subcellular location is the secreted. Its function is as follows. Snake venom serine protease that may act in the hemostasis system of the prey. This chain is Snake venom serine protease PTLE1, found in Gloydius halys (Chinese water mocassin).